Consider the following 383-residue polypeptide: 8-amino-7-oxononanoate synthase (383 aa).

Arginine 21 is a binding site for substrate. Glycine 108 to phenylalanine 109 lines the pyridoxal 5'-phosphate pocket. Histidine 133 is a binding site for substrate. The pyridoxal 5'-phosphate site is built by serine 179, histidine 207, and threonine 233. Lysine 236 carries the post-translational modification N6-(pyridoxal phosphate)lysine. Threonine 350 contacts substrate.

Belongs to the class-II pyridoxal-phosphate-dependent aminotransferase family. BioF subfamily. In terms of assembly, homodimer. The cofactor is pyridoxal 5'-phosphate.

The catalysed reaction is 6-carboxyhexanoyl-[ACP] + L-alanine + H(+) = (8S)-8-amino-7-oxononanoate + holo-[ACP] + CO2. Its pathway is cofactor biosynthesis; biotin biosynthesis. In terms of biological role, catalyzes the decarboxylative condensation of pimeloyl-[acyl-carrier protein] and L-alanine to produce 8-amino-7-oxononanoate (AON), [acyl-carrier protein], and carbon dioxide. The sequence is that of 8-amino-7-oxononanoate synthase from Yersinia enterocolitica serotype O:8 / biotype 1B (strain NCTC 13174 / 8081).